Consider the following 230-residue polypeptide: Flagellar L-ring protein (230 aa).

An N-terminal signal peptide occupies residues 1 to 15; that stretch reads MSRLPSLSSLCLAIA. The N-palmitoyl cysteine moiety is linked to residue cysteine 16. Cysteine 16 is lipidated: S-diacylglycerol cysteine.

This sequence belongs to the FlgH family. In terms of assembly, the basal body constitutes a major portion of the flagellar organelle and consists of four rings (L,P,S, and M) mounted on a central rod.

It is found in the cell outer membrane. The protein resides in the bacterial flagellum basal body. Functionally, assembles around the rod to form the L-ring and probably protects the motor/basal body from shearing forces during rotation. This chain is Flagellar L-ring protein, found in Xanthomonas campestris pv. campestris (strain 8004).